The sequence spans 428 residues: Stabilizer of axonemal microtubules 4 (428 aa).

The segment at alanine 201–leucine 231 is disordered.

As to quaternary structure, microtubule inner protein component of sperm flagellar doublet microtubules. Interacts with PPP1CA.

It localises to the cell projection. Its subcellular location is the cilium. It is found in the cytoplasm. The protein resides in the cytoskeleton. The protein localises to the flagellum axoneme. The chain is Stabilizer of axonemal microtubules 4 from Bos taurus (Bovine).